A 457-amino-acid polypeptide reads, in one-letter code: uncharacterized protein (457 aa).

One can recognise a TRAM domain in the interval 10-69 (ALLQGQTVTVPITALAAGGDGIARLTDGRVLFVAGAVPGDTVEARLVHLKKDHGFGKILQ). Residues cysteine 82, cysteine 88, cysteine 91, and cysteine 170 each coordinate [4Fe-4S] cluster. 4 residues coordinate S-adenosyl-L-methionine: glutamine 294, tyrosine 323, glutamate 344, and aspartate 387. Cysteine 414 functions as the Nucleophile in the catalytic mechanism.

Belongs to the class I-like SAM-binding methyltransferase superfamily. RNA M5U methyltransferase family.

This is an uncharacterized protein from Gloeobacter violaceus (strain ATCC 29082 / PCC 7421).